We begin with the raw amino-acid sequence, 654 residues long: Peptide-N(4)-(N-acetyl-beta-glucosaminyl)asparagine amidase (654 aa).

At Ala2 the chain carries N-acetylalanine. The PUB domain maps to Glu30–Lys91. The disordered stretch occupies residues Arg112–Ser163. Residues Ser124 to Ser163 show a composition bias toward polar residues. Thr137 is modified (phosphothreonine). Residues Cys250, Cys253, Cys283, and Cys286 each coordinate Zn(2+). The active-site Nucleophile is the Cys309. Residues His336 and Asp353 contribute to the active site. The region spanning Glu454–Leu654 is the PAW domain.

This sequence belongs to the transglutaminase-like superfamily. PNGase family. As to quaternary structure, component of a complex required to couple retrotranslocation, ubiquitination and deglycosylation composed of NGLY1, SAKS1, AMFR, VCP and RAD23B. Interacts with the proteasome components RAD23B and PSMC1. Interacts with directly with VCP. Interacts with DERL1, bringing it close to the endoplasmic reticulum membrane. Interacts with SAKS1. Requires Zn(2+) as cofactor.

It localises to the cytoplasm. The catalysed reaction is Hydrolysis of an N(4)-(acetyl-beta-D-glucosaminyl)asparagine residue in which the glucosamine residue may be further glycosylated, to yield a (substituted) N-acetyl-beta-D-glucosaminylamine and a peptide containing an aspartate residue.. Inhibited by Z-VAD-fmk, a well-known caspase inhibitor, which inhibits enzyme activity through covalent binding of the carbohydrate to the single Cys-306 residue. Functionally, specifically deglycosylates the denatured form of N-linked glycoproteins in the cytoplasm and assists their proteasome-mediated degradation. Cleaves the beta-aspartyl-glucosamine (GlcNAc) of the glycan and the amide side chain of Asn, converting Asn to Asp. Prefers proteins containing high-mannose over those bearing complex type oligosaccharides. Can recognize misfolded proteins in the endoplasmic reticulum that are exported to the cytosol to be destroyed and deglycosylate them, while it has no activity toward native proteins. Deglycosylation is a prerequisite for subsequent proteasome-mediated degradation of some, but not all, misfolded glycoproteins. The sequence is that of Peptide-N(4)-(N-acetyl-beta-glucosaminyl)asparagine amidase (NGLY1) from Homo sapiens (Human).